The following is a 794-amino-acid chain: Elongator complex protein 2 (794 aa).

13 WD repeats span residues 55-93, 98-140, 147-188, 203-244, 286-328, 337-376, 384-423, 433-472, 557-601, 604-643, 654-693, 705-751, and 759-794; these read EHTK…TTKS, GHTS…YVCF, DGFC…AGEG, GHED…KEQM, GHEG…IWLE, GNSV…PQLW, GHYG…GANP, IHGY…ENFR, GHGY…QIQK, GHQL…VSYQ, VHTR…KESS, LKNE…WKLL, and AHHL…IKLT.

It belongs to the WD repeat ELP2 family. In terms of assembly, component of the elongator complex composed of Elp1, Elp2, Elp3, Elp4, Elp5 and Elp6. The elongator complex associates with and stabilizes microtubules; efficient interaction requires the full complex.

The protein resides in the cytoplasm. It localises to the nucleus. Its subcellular location is the cytoskeleton. It is found in the spindle. It participates in tRNA modification; 5-methoxycarbonylmethyl-2-thiouridine-tRNA biosynthesis. Functionally, component of the elongator complex, which is required for multiple tRNA modifications, including mcm5U (5-methoxycarbonylmethyl uridine), mcm5s2U (5-methoxycarbonylmethyl-2-thiouridine), and ncm5U (5-carbamoylmethyl uridine). The elongator complex catalyzes the formation of carboxymethyluridine in the wobble base at position 34 in tRNAs. Binding by the elongator complex stabilizes microtubules and promotes their growth. This induces central spindle asymmetry, promoting polarized signaling endosome trafficking during asymmetric cell division and cell fate assignation of sensory organ precursor cells. Involved in the regulation of the STAT pathway. In Drosophila melanogaster (Fruit fly), this protein is Elongator complex protein 2.